A 116-amino-acid chain; its full sequence is Urease subunit beta (116 aa).

The interval 97–116 (IQGPLDAGTAETAPGLPQQP) is disordered.

Belongs to the urease beta subunit family. Heterotrimer of UreA (gamma), UreB (beta) and UreC (alpha) subunits. Three heterotrimers associate to form the active enzyme.

Its subcellular location is the cytoplasm. The enzyme catalyses urea + 2 H2O + H(+) = hydrogencarbonate + 2 NH4(+). The protein operates within nitrogen metabolism; urea degradation; CO(2) and NH(3) from urea (urease route): step 1/1. The sequence is that of Urease subunit beta from Paracidovorax citrulli (strain AAC00-1) (Acidovorax citrulli).